The sequence spans 374 residues: Large ribosomal subunit protein bL27m (374 aa).

A mitochondrion-targeting transit peptide spans 1 to 41; sequence MLRLSGVKSAVRARAAAGAAFSVSLSGPQAVSLLALPLVRH.

This sequence belongs to the bacterial ribosomal protein bL27 family.

The protein localises to the mitochondrion. Its function is as follows. Component of the large subunit of mitochondrial ribosome. In Yarrowia lipolytica (strain CLIB 122 / E 150) (Yeast), this protein is Large ribosomal subunit protein bL27m (MRPL2).